Consider the following 948-residue polypeptide: Valine--tRNA ligase (948 aa).

A 'HIGH' region motif is present at residues 40 to 50 (PNVTGSLHMGH). The 'KMSKS' region signature appears at 551-555 (KMSKS). Lysine 554 is a binding site for ATP. Residues 879-945 (LIDKGAELAR…GKLAEQHARI (67 aa)) are a coiled coil.

This sequence belongs to the class-I aminoacyl-tRNA synthetase family. ValS type 1 subfamily. As to quaternary structure, monomer.

It is found in the cytoplasm. The catalysed reaction is tRNA(Val) + L-valine + ATP = L-valyl-tRNA(Val) + AMP + diphosphate. Catalyzes the attachment of valine to tRNA(Val). As ValRS can inadvertently accommodate and process structurally similar amino acids such as threonine, to avoid such errors, it has a 'posttransfer' editing activity that hydrolyzes mischarged Thr-tRNA(Val) in a tRNA-dependent manner. This chain is Valine--tRNA ligase, found in Pseudomonas savastanoi pv. phaseolicola (strain 1448A / Race 6) (Pseudomonas syringae pv. phaseolicola (strain 1448A / Race 6)).